A 305-amino-acid polypeptide reads, in one-letter code: Aspartate carbamoyltransferase catalytic subunit (305 aa).

2 residues coordinate carbamoyl phosphate: arginine 56 and threonine 57. Lysine 85 is an L-aspartate binding site. Residues arginine 106, histidine 134, and glutamine 137 each contribute to the carbamoyl phosphate site. Residues arginine 167 and arginine 227 each contribute to the L-aspartate site. Leucine 266 and proline 267 together coordinate carbamoyl phosphate.

The protein belongs to the aspartate/ornithine carbamoyltransferase superfamily. ATCase family. In terms of assembly, heterooligomer of catalytic and regulatory chains.

The enzyme catalyses carbamoyl phosphate + L-aspartate = N-carbamoyl-L-aspartate + phosphate + H(+). Its pathway is pyrimidine metabolism; UMP biosynthesis via de novo pathway; (S)-dihydroorotate from bicarbonate: step 2/3. In terms of biological role, catalyzes the condensation of carbamoyl phosphate and aspartate to form carbamoyl aspartate and inorganic phosphate, the committed step in the de novo pyrimidine nucleotide biosynthesis pathway. This chain is Aspartate carbamoyltransferase catalytic subunit, found in Thermoplasma volcanium (strain ATCC 51530 / DSM 4299 / JCM 9571 / NBRC 15438 / GSS1).